The following is a 170-amino-acid chain: 3-hydroxydecanoyl-[acyl-carrier-protein] dehydratase (170 aa).

Residue His-69 is part of the active site.

It belongs to the thioester dehydratase family. FabA subfamily. In terms of assembly, homodimer.

Its subcellular location is the cytoplasm. It catalyses the reaction a (3R)-hydroxyacyl-[ACP] = a (2E)-enoyl-[ACP] + H2O. It carries out the reaction (3R)-hydroxydecanoyl-[ACP] = (2E)-decenoyl-[ACP] + H2O. The enzyme catalyses (2E)-decenoyl-[ACP] = (3Z)-decenoyl-[ACP]. It participates in lipid metabolism; fatty acid biosynthesis. Functionally, necessary for the introduction of cis unsaturation into fatty acids. Catalyzes the dehydration of (3R)-3-hydroxydecanoyl-ACP to E-(2)-decenoyl-ACP and then its isomerization to Z-(3)-decenoyl-ACP. Can catalyze the dehydratase reaction for beta-hydroxyacyl-ACPs with saturated chain lengths up to 16:0, being most active on intermediate chain length. This Caulobacter vibrioides (strain ATCC 19089 / CIP 103742 / CB 15) (Caulobacter crescentus) protein is 3-hydroxydecanoyl-[acyl-carrier-protein] dehydratase.